A 182-amino-acid polypeptide reads, in one-letter code: Shikimate kinase (182 aa).

14–19 (GAGKTT) lines the ATP pocket. T18 contacts Mg(2+). Substrate is bound by residues D36, R60, and G84. R122 contacts ATP. R141 is a binding site for substrate.

Belongs to the shikimate kinase family. As to quaternary structure, monomer. Requires Mg(2+) as cofactor.

The protein resides in the cytoplasm. The enzyme catalyses shikimate + ATP = 3-phosphoshikimate + ADP + H(+). The protein operates within metabolic intermediate biosynthesis; chorismate biosynthesis; chorismate from D-erythrose 4-phosphate and phosphoenolpyruvate: step 5/7. Catalyzes the specific phosphorylation of the 3-hydroxyl group of shikimic acid using ATP as a cosubstrate. This Marinomonas sp. (strain MWYL1) protein is Shikimate kinase.